The following is a 202-amino-acid chain: Probable molybdenum cofactor guanylyltransferase (202 aa).

GTP-binding positions include V9 to G11, K22, N50, D77, and D102. Mg(2+) is bound at residue D102.

This sequence belongs to the MobA family. Mg(2+) serves as cofactor.

The protein resides in the cytoplasm. The catalysed reaction is Mo-molybdopterin + GTP + H(+) = Mo-molybdopterin guanine dinucleotide + diphosphate. Functionally, transfers a GMP moiety from GTP to Mo-molybdopterin (Mo-MPT) cofactor (Moco or molybdenum cofactor) to form Mo-molybdopterin guanine dinucleotide (Mo-MGD) cofactor. The sequence is that of Probable molybdenum cofactor guanylyltransferase from Natronomonas pharaonis (strain ATCC 35678 / DSM 2160 / CIP 103997 / JCM 8858 / NBRC 14720 / NCIMB 2260 / Gabara) (Halobacterium pharaonis).